Consider the following 422-residue polypeptide: ATP-dependent RNA helicase RhlB (422 aa).

The short motif at 9–37 (QKFSDFALHPLVIKAIENQGFYHCTPIQA) is the Q motif element. The Helicase ATP-binding domain maps to 40-219 (FPITLAGRDV…FEQMNHPEYI (180 aa)). 53-60 (AQTGTGKT) serves as a coordination point for ATP. A DEAD box motif is present at residues 165-168 (DEAD). Positions 245–390 (RLLQTLIEEE…TSEYNKEALL (146 aa)) constitute a Helicase C-terminal domain. The tract at residues 394 to 422 (PQPKRLQRHHRHYAGSRNQGASRKPRSPQ) is disordered. A compositionally biased stretch (basic residues) spans 398–407 (RLQRHHRHYA).

This sequence belongs to the DEAD box helicase family. RhlB subfamily. As to quaternary structure, component of the RNA degradosome, which is a multiprotein complex involved in RNA processing and mRNA degradation.

Its subcellular location is the cytoplasm. It catalyses the reaction ATP + H2O = ADP + phosphate + H(+). Functionally, DEAD-box RNA helicase involved in RNA degradation. Has RNA-dependent ATPase activity and unwinds double-stranded RNA. In Hamiltonella defensa subsp. Acyrthosiphon pisum (strain 5AT), this protein is ATP-dependent RNA helicase RhlB.